A 652-amino-acid chain; its full sequence is Carboxypeptidase S1 homolog A (652 aa).

A signal peptide spans 1–19; sequence MRLAASIAVALPVIGAASA. A disulfide bridge connects residues Cys-50 and Cys-121. N-linked (GlcNAc...) asparagine glycans are attached at residues Asn-77, Asn-132, Asn-161, Asn-168, Asn-184, and Asn-202. The active site involves Ser-238. Asn-260, Asn-299, Asn-347, and Asn-410 each carry an N-linked (GlcNAc...) asparagine glycan. 2 disulfide bridges follow: Cys-325/Cys-361 and Cys-332/Cys-354. Residue Asp-458 is part of the active site. A substrate-binding site is contributed by Cys-461. 3 N-linked (GlcNAc...) asparagine glycosylation sites follow: Asn-474, Asn-492, and Asn-505. His-516 is an active-site residue. Glu-517 contributes to the substrate binding site. Asn-594 carries an N-linked (GlcNAc...) asparagine glycan. The segment at 608–628 is disordered; sequence AASKGNPPPTTTSSPTASPTA. The segment covering 618–628 has biased composition (low complexity); sequence TTSSPTASPTA. Gly-629 is lipidated: GPI-anchor amidated glycine. The propeptide at 630–652 is removed in mature form; it reads SAMLKAPVAMLAISALTVLAFYL.

It belongs to the peptidase S10 family.

Its subcellular location is the cell membrane. It carries out the reaction Preferential release of a C-terminal arginine or lysine residue.. Extracellular serine carboxypeptidase that contributes to pathogenicity. This chain is Carboxypeptidase S1 homolog A (SCPA), found in Trichophyton verrucosum (strain HKI 0517).